The primary structure comprises 201 residues: DNA polymerase epsilon subunit C (201 aa).

Disordered regions lie at residues 102–165 (KKRE…KSTR) and 178–201 (SALD…STDP). Positions 117 to 144 (VVIEEPELHEDDGVEEEEEEDEVSEEEE) are enriched in acidic residues. 2 stretches are compositionally biased toward basic and acidic residues: residues 145-164 (PVHN…DKST) and 182-201 (VGEH…STDP). Phosphoserine occurs at positions 186, 188, and 189.

In terms of assembly, DNA polymerase epsilon is a heterotetramer consisting of POL2, DPB2, DPB3 and DPB4.

The protein localises to the nucleus. As accessory component of the DNA polymerase epsilon (DNA polymerase II) participates in chromosomal DNA replication. It is required during synthesis of the leading and lagging DNA strands at the replication fork and binds at/or near replication origins and moves along DNA with the replication fork. It has 3'-5' proofreading exonuclease activity that correct errors arising during DNA replication. It is also involved in DNA synthesis during DNA repair. The protein is DNA polymerase epsilon subunit C (DPB3) of Saccharomyces cerevisiae (strain ATCC 204508 / S288c) (Baker's yeast).